The sequence spans 509 residues: Methylthioalkylmalate synthase 1-1, chloroplastic (509 aa).

Residues 1 to 55 constitute a chloroplast transit peptide; the sequence is MSFSPTYSIVMASPLLTSSQMIPTTGSTVGFRSILPFGSLRLTRPYKKTSLFISY. In terms of domain architecture, Pyruvate carboxyltransferase spans 91-365; sequence VRVYDTTLRD…YTRIDTRQIM (275 aa). Positions 100, 298, and 300 each coordinate Mn(2+).

It belongs to the alpha-IPM synthase/homocitrate synthase family. As to quaternary structure, monomer. Mn(2+) is required as a cofactor. It depends on Co(2+) as a cofactor.

The protein resides in the plastid. Its subcellular location is the chloroplast. The enzyme catalyses 4-methylsulfanyl-2-oxobutanoate + acetyl-CoA + H2O = 2-(2-methylsulfanyl)ethylmalate + CoA + H(+). Its pathway is secondary metabolite biosynthesis. With respect to regulation, inhibited by EDTA, Cu(2+) and Zn(2+). Its function is as follows. Determines the side chain length of aliphatic glucosinolate structures. Involved in the biosynthesis of glucosinolate derivative natural products such as 6-(methylsulfinyl)hexylisothiocyanate (6-MSITC), a compound found in wasabi with diverse health-promoting properties. Catalyzes the conversion of 4-methylsulfanyl-2-oxobutanoate (4-MTOB) into 2-(2-methylsulfanyl)ethylmalate (2-(2-MT)EM). This Eutrema japonicum (Wasabi plant) protein is Methylthioalkylmalate synthase 1-1, chloroplastic.